The following is a 140-amino-acid chain: Class I hydrophobin 1 (140 aa).

An N-terminal signal peptide occupies residues Met-1–Ala-18. The interval Ala-22–Thr-60 is disordered. Intrachain disulfides connect Cys-58-Cys-119, Cys-65-Cys-113, Cys-66-Cys-99, and Cys-120-Cys-133.

The protein belongs to the fungal hydrophobin family. As to quaternary structure, self-assembles to form functional amyloid fibrils called rodlets. Self-assembly into fibrillar rodlets occurs spontaneously at hydrophobic:hydrophilic interfaces and the rodlets further associate laterally to form amphipathic monolayers.

The protein resides in the secreted. The protein localises to the cell wall. Functionally, aerial growth, conidiation, and dispersal of filamentous fungi in the environment rely upon a capability of their secreting small amphipathic proteins called hydrophobins (HPBs) with low sequence identity. Class I can self-assemble into an outermost layer of rodlet bundles on aerial cell surfaces, conferring cellular hydrophobicity that supports fungal growth, development and dispersal; whereas Class II form highly ordered films at water-air interfaces through intermolecular interactions but contribute nothing to the rodlet structure. In Pisolithus tinctorius (Dead man's foot), this protein is Class I hydrophobin 1.